Consider the following 215-residue polypeptide: ATP-dependent Clp protease proteolytic subunit 3 (215 aa).

Serine 119 functions as the Nucleophile in the catalytic mechanism. The active site involves histidine 144.

The protein belongs to the peptidase S14 family. As to quaternary structure, fourteen ClpP subunits assemble into 2 heptameric rings which stack back to back to give a disk-like structure with a central cavity, resembling the structure of eukaryotic proteasomes.

Its subcellular location is the cytoplasm. The enzyme catalyses Hydrolysis of proteins to small peptides in the presence of ATP and magnesium. alpha-casein is the usual test substrate. In the absence of ATP, only oligopeptides shorter than five residues are hydrolyzed (such as succinyl-Leu-Tyr-|-NHMec, and Leu-Tyr-Leu-|-Tyr-Trp, in which cleavage of the -Tyr-|-Leu- and -Tyr-|-Trp bonds also occurs).. In terms of biological role, cleaves peptides in various proteins in a process that requires ATP hydrolysis. Has a chymotrypsin-like activity. Plays a major role in the degradation of misfolded proteins. The sequence is that of ATP-dependent Clp protease proteolytic subunit 3 from Prochlorococcus marinus subsp. pastoris (strain CCMP1986 / NIES-2087 / MED4).